Reading from the N-terminus, the 121-residue chain is Basic phospholipase A2 F17 (121 aa).

Intrachain disulfides connect C25-C114, C27-C43, C42-C94, C48-C121, C49-C87, C56-C80, and C74-C85. 3 residues coordinate Ca(2+): Y26, G28, and G30. Residue H46 is part of the active site. Residue D47 participates in Ca(2+) binding. Residue D88 is part of the active site.

It belongs to the phospholipase A2 family. Group II subfamily. D49 sub-subfamily. As to quaternary structure, when this protein is associated with crotapotin (F5 or F7), it forms the crotoxin protein. The cofactor is Ca(2+). In terms of tissue distribution, expressed by the venom gland.

The protein resides in the secreted. The catalysed reaction is a 1,2-diacyl-sn-glycero-3-phosphocholine + H2O = a 1-acyl-sn-glycero-3-phosphocholine + a fatty acid + H(+). Activated by heparin. Inhibited by its chaperone crotapotin. Its function is as follows. Snake venom phospholipase A2 (PLA2) that has anticoagulant activity and inhibits bactericial growth of the Gram-negative bacteria Xanthomonas axonopodis pv. passiflorae (in monomeric form). PLA2 catalyzes the calcium-dependent hydrolysis of the 2-acyl groups in 3-sn-phosphoglycerides. This Crotalus durissus terrificus (South American rattlesnake) protein is Basic phospholipase A2 F17.